The sequence spans 333 residues: Flap endonuclease 1 (333 aa).

An N-domain region spans residues 1–99 (MGVALRDILA…ETNAERKKLR (99 aa)). Residues D28, D81, E153, E155, D174, D176, and D235 each coordinate Mg(2+). Positions 117 to 256 (EAYRQARSAT…TALKIVKSGG (140 aa)) are I-domain. An interaction with PCNA region spans residues 325 to 333 (GQKTLESFF).

Belongs to the XPG/RAD2 endonuclease family. FEN1 subfamily. Interacts with PCNA. PCNA stimulates the nuclease activity without altering cleavage specificity. Requires Mg(2+) as cofactor.

In terms of biological role, structure-specific nuclease with 5'-flap endonuclease and 5'-3' exonuclease activities involved in DNA replication and repair. During DNA replication, cleaves the 5'-overhanging flap structure that is generated by displacement synthesis when DNA polymerase encounters the 5'-end of a downstream Okazaki fragment. Binds the unpaired 3'-DNA end and kinks the DNA to facilitate 5' cleavage specificity. Cleaves one nucleotide into the double-stranded DNA from the junction in flap DNA, leaving a nick for ligation. Also involved in the base excision repair (BER) pathway. Acts as a genome stabilization factor that prevents flaps from equilibrating into structures that lead to duplications and deletions. Also possesses 5'-3' exonuclease activity on nicked or gapped double-stranded DNA. This Methanoregula boonei (strain DSM 21154 / JCM 14090 / 6A8) protein is Flap endonuclease 1.